Consider the following 147-residue polypeptide: Putative pre-16S rRNA nuclease (147 aa).

This sequence belongs to the YqgF nuclease family.

It is found in the cytoplasm. Its function is as follows. Could be a nuclease involved in processing of the 5'-end of pre-16S rRNA. This Latilactobacillus sakei subsp. sakei (strain 23K) (Lactobacillus sakei subsp. sakei) protein is Putative pre-16S rRNA nuclease.